Consider the following 133-residue polypeptide: UPF0344 protein SH1980 (133 aa).

4 helical membrane-spanning segments follow: residues 1–21 (MLHM…IAFL), 42–62 (VFML…FMAA), 71–91 (MLLT…EVSI), and 103–123 (LFWA…ILPW).

Belongs to the UPF0344 family.

Its subcellular location is the cell membrane. This Staphylococcus haemolyticus (strain JCSC1435) protein is UPF0344 protein SH1980.